Here is a 1799-residue protein sequence, read N- to C-terminus: Putative neural-cadherin 2 (1799 aa).

N-linked (GlcNAc...) asparagine glycans are attached at residues asparagine 13, asparagine 64, asparagine 86, asparagine 118, asparagine 195, asparagine 260, asparagine 264, asparagine 283, and asparagine 377. Cadherin domains lie at 37 to 136 (DRFL…PPVF), 137 to 252 (DRQT…APQF), 253 to 364 (PQGI…PPQF), 368 to 485 (EWVT…VPKF), 486 to 590 (DREH…APTF), 590 to 709 (FAQD…QPGS), and 708 to 812 (GSKS…AGSM). N-linked (GlcNAc...) asparagine glycosylation is found at asparagine 601, asparagine 793, asparagine 910, asparagine 948, and asparagine 969. The EGF-like 1 domain occupies 973–1010 (QDHNCRTHLCYNGGRCVETRNGPKCVACPVGYNGPRCQ). Cystine bridges form between cysteine 977–cysteine 988, cysteine 982–cysteine 997, cysteine 1000–cysteine 1009, cysteine 1191–cysteine 1217, cysteine 1224–cysteine 1239, cysteine 1233–cysteine 1248, and cysteine 1250–cysteine 1259. Positions 1011–1217 (QSTRSFRGNG…ALARNSFPAC (207 aa)) constitute a Laminin G-like 1 domain. Residues 1220 to 1260 (TDEVCLKTEHTARCWEHGNCVASLVQAKCHCQPGWMGPGCN) enclose the EGF-like 2 domain. Residues 1263–1454 (TIPTTFKAQS…TMARNLERNC (192 aa)) enclose the Laminin G-like 2 domain. N-linked (GlcNAc...) asparagine glycans are attached at residues asparagine 1376 and asparagine 1437. 4 disulfides stabilise this stretch: cysteine 1419–cysteine 1454, cysteine 1501–cysteine 1512, cysteine 1506–cysteine 1523, and cysteine 1525–cysteine 1534. In terms of domain architecture, EGF-like 3; calcium-binding spans 1497–1535 (DRNECLDLPCLNGATCINLEPRLRYRCICPEGYWGENCE). Residues 1549-1569 (ALGAIFVCLIIILILALIFVL) traverse the membrane as a helical segment. The segment at 1726–1799 (ASSQLPSDGG…PLPEVDKVVL (74 aa)) is disordered. 3 stretches are compositionally biased toward gly residues: residues 1733 to 1744 (DGGGGSGDGPGP), 1752 to 1763 (LGGGGTGGGSGI), and 1775 to 1786 (SGAGPGGGGGSS).

Its subcellular location is the cell membrane. Cadherins are calcium-dependent cell adhesion proteins. They preferentially interact with themselves in a homophilic manner in connecting cells. This is Putative neural-cadherin 2 (CadN2) from Drosophila melanogaster (Fruit fly).